The sequence spans 1249 residues: Protein STU1 (1249 aa).

Low complexity-rich tracts occupy residues 138 to 156 and 555 to 574; these read LNSSGSLKAGSLSSSTATK and AASPMPSYASSSSTGAPSSA. Disordered regions lie at residues 138–161, 545–619, 644–718, 755–846, 860–891, and 1084–1118; these read LNSSGSLKAGSLSSSTATKSKPHE, KQLE…NPVF, HVET…LGLG, AEHE…NGNI, AFQTPLNPKTSALRSSSAIRTPAWKDSPRPEA, and HPAPPSSSADNSDPMTSALSQLSLSSSKESPEKRT. Positions 581-600 are enriched in basic and acidic residues; it reads KKMDLKAMLAERRRAVKEAG. Composition is skewed to low complexity over residues 647 to 667 and 708 to 718; these read TSSPSPVRSPTPSSSATRIRP and SPSLSPSLGLG. Over residues 755–774 the composition is skewed to basic and acidic residues; sequence AEHEVDELTLKEGQKTRDDG. Polar residues-rich tracts occupy residues 809–822, 831–844, and 863–878; these read QQGNTFSTSTSGRV, ATGTTASLPNSRNG, and TPLNPKTSALRSSSAI. The segment covering 1089–1111 has biased composition (low complexity); that stretch reads SSSADNSDPMTSALSQLSLSSSK.

The protein belongs to the CLASP family. Interacts with microtubules.

It is found in the cytoplasm. The protein resides in the cytoskeleton. The protein localises to the nucleus. Its subcellular location is the spindle. In terms of biological role, microtubule binding protein that promotes the stabilization of dynamic microtubules. Required for mitotic spindle formation. The protein is Protein STU1 (STU1) of Cryptococcus neoformans var. neoformans serotype D (strain JEC21 / ATCC MYA-565) (Filobasidiella neoformans).